The following is a 376-amino-acid chain: T-box transcription factor 18 (376 aa).

A compositionally biased stretch (low complexity) spans 38–63; the sequence is STSRPSSSSPPSLPAVSSELLSSSFP. The disordered stretch occupies residues 38–76; it reads STSRPSSSSPPSLPAVSSELLSSSFPTNAPESSSRDLAP. The T-box DNA-binding region spans 171-364; the sequence is LANQEQWAKF…GNKYCRTDRK (194 aa).

Its subcellular location is the nucleus. Functionally, transcriptional regulator involved in developmental processes. Directly binds to the promoter region of the sex-determining factor xol-1 to activate its transcription. Its activation of xol-1 transcription controls sex determination and X chromosome dosage compensation to promote male development. Has a role in the fox-1-sex-1-mediated determination of sexual fate. The sequence is that of T-box transcription factor 18 from Caenorhabditis elegans.